Reading from the N-terminus, the 610-residue chain is Putative sensor histidine kinase NtrY-like (610 aa).

A run of 4 helical transmembrane segments spans residues 18–38 (IGILVAIAIIFSYFTYYTISI), 49–69 (KVIWFLLIDLIIFLVLGILLT), 92–112 (IVVAFSLAAAIPTIIVSISSA), and 292–312 (IIFIFIALLLLLIAISFGVIV). One can recognise an HAMP domain in the interval 314–368 (AKIVNPIKKLVIATDKVKSGDLTVQVPENEVDKDEIGTLYAAFNRMIKQLSRQQR). A Histidine kinase domain is found at 385 to 596 (KVAHEIKNPL…VIDIRFNLEE (212 aa)). The residue at position 388 (His388) is a Phosphohistidine; by autocatalysis.

The protein resides in the cell membrane. The catalysed reaction is ATP + protein L-histidine = ADP + protein N-phospho-L-histidine.. Its function is as follows. Member of the two-component regulatory system RBE_0470/RBE_0312. This Rickettsia bellii (strain RML369-C) protein is Putative sensor histidine kinase NtrY-like.